The following is a 149-amino-acid chain: MKIYTQRNNKVEFSDSGSSEYSEYQRVIDADTKENTYEIVATYNRYDEIQEAGEGTDLRSMLDKYGDDYLELLPPARLGGDDTILPKSVLELENIRLQNTEYLSLLENINSKLDKQGLGDLDNFIKNWQESQKKIENEKGKKEDEKENE.

Belongs to the microvidae B protein family.

It localises to the host cytoplasm. In terms of biological role, participates in the assembly of the viral procapsid in the cytoplasm. Released from the procapsid upon genome packaging, possibly through affinity displacement by the protein ORF8, or by proteolysis. In Spiroplasma virus 4 (SpV4), this protein is Internal scaffolding protein ORF3.